A 386-amino-acid chain; its full sequence is uncharacterized protein (386 aa).

Helical transmembrane passes span Trp3–Ile23, Leu42–Trp62, Phe72–Gly92, Val102–Phe122, Ile145–Phe165, Phe183–Leu203, Trp212–Leu232, Thr244–Val264, Ile276–Gly296, Val308–Gly328, and Leu333–Ser353.

This sequence to R.prowazekii RP382.

It localises to the cell membrane. This is an uncharacterized protein from Aquifex aeolicus (strain VF5).